We begin with the raw amino-acid sequence, 313 residues long: Porphobilinogen deaminase (313 aa).

Cys-242 bears the S-(dipyrrolylmethanemethyl)cysteine mark.

This sequence belongs to the HMBS family. As to quaternary structure, monomer. Dipyrromethane serves as cofactor.

It catalyses the reaction 4 porphobilinogen + H2O = hydroxymethylbilane + 4 NH4(+). It participates in porphyrin-containing compound metabolism; protoporphyrin-IX biosynthesis; coproporphyrinogen-III from 5-aminolevulinate: step 2/4. Tetrapolymerization of the monopyrrole PBG into the hydroxymethylbilane pre-uroporphyrinogen in several discrete steps. The chain is Porphobilinogen deaminase from Pseudomonas syringae pv. syringae (strain B728a).